The primary structure comprises 230 residues: Lactate utilization protein C (230 aa).

The protein belongs to the LutC/YkgG family.

Its function is as follows. Is involved in L-lactate degradation and allows cells to grow with lactate as the sole carbon source. This Halalkalibacterium halodurans (strain ATCC BAA-125 / DSM 18197 / FERM 7344 / JCM 9153 / C-125) (Bacillus halodurans) protein is Lactate utilization protein C.